Reading from the N-terminus, the 430-residue chain is Probable carboxypeptidase AO090003000058 (430 aa).

Residues 1 to 16 (MKSIYSLVLCTALTAA) form the signal peptide. Asparagine 84 carries N-linked (GlcNAc...) asparagine glycosylation. Aspartate 156 is a binding site for Zn(2+). Residue glutamate 188 is the Proton acceptor of the active site. Residue glutamate 189 participates in Zn(2+) binding. Asparagine 285 is a glycosylation site (N-linked (GlcNAc...) asparagine).

This sequence belongs to the peptidase M20A family. Zn(2+) is required as a cofactor.

Its subcellular location is the secreted. This Aspergillus oryzae (strain ATCC 42149 / RIB 40) (Yellow koji mold) protein is Probable carboxypeptidase AO090003000058.